Here is a 422-residue protein sequence, read N- to C-terminus: Serine protease HTRA2, mitochondrial (422 aa).

A mitochondrion-targeting transit peptide spans 1–17; it reads MALRGCHRLEVIFKRCI. Residues 18–74 constitute a propeptide that is removed on maturation; that stretch reads ASPVLHSQAGNRRSSQLAIKGVDPNSNGNSGQYQQNGEHKEKGWRRLVRFFVPFSLG. Residues 33-55 form a disordered region; that stretch reads QLAIKGVDPNSNGNSGQYQQNGE. Over residues 42 to 53 the composition is skewed to low complexity; that stretch reads NSNGNSGQYQQN. A helical transmembrane segment spans residues 64–82; sequence LVRFFVPFSLGAAVSAAII. 2 consecutive short sequence motifs (IAP-binding) follow at residues 75–78 and 94–97; these read AAVS and SKMT. Residues 139-302 form a serine protease region; it reads SNGSGFIIEQ…IPIDYVKVFL (164 aa). Active-site charge relay system residues include histidine 157, aspartate 189, and serine 266. The PDZ domain occupies 325-410; sequence MGITMLTLTP…TLDIVILRGV (86 aa).

Belongs to the peptidase S1C family. As to quaternary structure, interacts with th/DIAP1 (via BIR 2 domain).

It is found in the mitochondrion intermembrane space. The protein localises to the mitochondrion membrane. It carries out the reaction Cleavage of non-polar aliphatic amino-acids at the P1 position, with a preference for Val, Ile and Met. At the P2 and P3 positions, Arg is selected most strongly with a secondary preference for other hydrophilic residues.. Functionally, serine protease that shows proteolytic activity against a non-specific substrate beta-casein. Promotes or induces cell death either by direct binding to and inhibition of BIRC proteins (also called inhibitor of apoptosis proteins, IAPs), leading to an increase in caspase activity, or by a BIRC inhibition-independent, caspase-independent and serine protease activity-dependent mechanism. Can antagonize antiapoptotic activity of th/Diap1 by directly inducing the degradation of th/Diap1. This is Serine protease HTRA2, mitochondrial from Drosophila simulans (Fruit fly).